The sequence spans 907 residues: Translation initiation factor IF-2 (907 aa).

Basic and acidic residues-rich tracts occupy residues leucine 223–alanine 235, valine 251–alanine 263, and glycine 270–lysine 281. The tract at residues leucine 223 to proline 320 is disordered. Positions proline 407–lysine 576 constitute a tr-type G domain. Residues glycine 416–threonine 423 form a G1 region. Glycine 416–threonine 423 contributes to the GTP binding site. The G2 stretch occupies residues glycine 441–histidine 445. The interval aspartate 462–glycine 465 is G3. GTP-binding positions include aspartate 462–histidine 466 and asparagine 516–aspartate 519. The tract at residues asparagine 516–aspartate 519 is G4. Residues serine 552–lysine 554 are G5.

This sequence belongs to the TRAFAC class translation factor GTPase superfamily. Classic translation factor GTPase family. IF-2 subfamily.

It is found in the cytoplasm. In terms of biological role, one of the essential components for the initiation of protein synthesis. Protects formylmethionyl-tRNA from spontaneous hydrolysis and promotes its binding to the 30S ribosomal subunits. Also involved in the hydrolysis of GTP during the formation of the 70S ribosomal complex. The protein is Translation initiation factor IF-2 of Methylobacillus flagellatus (strain ATCC 51484 / DSM 6875 / VKM B-1610 / KT).